We begin with the raw amino-acid sequence, 616 residues long: MVGQLSEGAIAAIMQKGDTNIKPILQVINIRPITTGNSPPRYRLLMSDGLNTLSSFMLATQLNPLVEEEQLSSNCVCQIHRFIVNTLKDGRRVVILMELEVLKSAEAVGVKIGNPVPYNEGLGQPQVAPPAPAASPAASSRPQPQNGSSGMGSTVSKAYGASKTFGKAAGPSLSHTSGGTQSKVVPIASLTPYQSKWTICARVTNKSQIRTWSNSRGEGKLFSLELVDESGEIRATAFNEQVDKFFPLIEVNKVYYFSKGTLKIANKQFTAVKNDYEMTFNNETSVMPCEDDHHLPTVQFDFTGIDDLENKSKDSLVDIIGICKSYEDATKITVRSNNREVAKRNIYLMDTSGKVVTATLWGEDADKFDGSRQPVLAIKGARVSDFGGRSLSVLSSSTIIANPDIPEAYKLRGWFDAEGQALDGVSISDLKSGGVGGSNTNWKTLYEVKSENLGQGDKPDYFSSVATVVYLRKENCMYQACPTQDCNKKVIDQQNGLYRCEKCDTEFPNFKYRMILSVNIADFQENQWVTCFQESAEAILGQNAAYLGELKDKNEQAFEEVFQNANFRSFIFRVRVKVETYNDESRIKATVMDVKPVDYREYGRRLVMSIRRSALM.

The residue at position 1 (methionine 1) is an N-acetylmethionine. Glycyl lysine isopeptide (Lys-Gly) (interchain with G-Cter in ubiquitin) cross-links involve residues lysine 22 and lysine 88. The interval glycine 121 to threonine 154 is disordered. Over residues alanine 134–glutamine 145 the composition is skewed to low complexity. An N6-acetyllysine; alternate mark is found at lysine 163 and lysine 167. Residues lysine 163 and lysine 167 each participate in a glycyl lysine isopeptide (Lys-Gly) (interchain with G-Cter in ubiquitin); alternate cross-link. Threonine 180 is modified (phosphothreonine). Residue lysine 183 forms a Glycyl lysine isopeptide (Lys-Gly) (interchain with G-Cter in ubiquitin) linkage. Residue threonine 191 is modified to Phosphothreonine. Positions tryptophan 197–asparagine 281 form a DNA-binding region, OB. Glycyl lysine isopeptide (Lys-Gly) (interchain with G-Cter in ubiquitin) cross-links involve residues lysine 220 and lysine 244. Position 259 is an N6-acetyllysine; alternate (lysine 259). Lysine 259 is covalently cross-linked (Glycyl lysine isopeptide (Lys-Gly) (interchain with G-Cter in ubiquitin); alternate). Residues lysine 267 and lysine 331 each participate in a glycyl lysine isopeptide (Lys-Gly) (interchain with G-Cter in ubiquitin) cross-link. Position 384 is a phosphoserine (serine 384). Glycyl lysine isopeptide (Lys-Gly) (interchain with G-Cter in ubiquitin) cross-links involve residues lysine 410 and lysine 431. Lysine 449 is covalently cross-linked (Glycyl lysine isopeptide (Lys-Gly) (interchain with G-Cter in SUMO)). Lysine 458 is covalently cross-linked (Glycyl lysine isopeptide (Lys-Gly) (interchain with G-Cter in ubiquitin)). The C4-type zinc-finger motif lies at cysteine 481–cysteine 503. Lysine 553 is covalently cross-linked (Glycyl lysine isopeptide (Lys-Gly) (interchain with G-Cter in ubiquitin)). Lysine 577 is covalently cross-linked (Glycyl lysine isopeptide (Lys-Gly) (interchain with G-Cter in SUMO)).

It belongs to the replication factor A protein 1 family. Component of the canonical replication protein A complex (RPA), a heterotrimer composed of RPA1, RPA2 and RPA3. Also a component of the aRPA, the alternative replication protein A complex, a trimeric complex similar to the replication protein A complex/RPA but where RPA1 and RPA3 are associated with RPA4 instead of RPA2. The DNA-binding activity may reside exclusively on the RPA1 subunit. Interacts with PRPF19; the PRP19-CDC5L complex is recruited to the sites of DNA repair where it ubiquitinates the replication protein A complex (RPA). Interacts with RIPK1. Interacts with the polymerase alpha subunit POLA1/p180; this interaction stabilizes the replicative complex and reduces the misincorporation rate of DNA polymerase alpha by acting as a fidelity clamp. Interacts with RAD51 and SENP6 to regulate DNA repair. Interacts with HELB; this interaction promotes HELB recruitment to chromatin following DNA damage. Interacts with PRIMPOL; leading to recruit PRIMPOL on chromatin and stimulate its DNA primase activity. Interacts with XPA; the interaction is direct and associates XPA with the RPA complex. Interacts with ETAA1; the interaction is direct and promotes ETAA1 recruitment at stalled replication forks. Interacts with RPA1; this interaction associates HROB with the RPA complex. Interacts (when poly-ADP-ribosylated) with HTATSF1. Interacts with BRIP1/FANCJ via this RPA1 subunit; following DNA damage they colocalize in foci in the nucleus. DNA damage-induced 'Lys-63'-linked polyubiquitination by PRPF19 mediates ATRIP recruitment to the RPA complex at sites of DNA damage and activation of ATR. Ubiquitinated by RFWD3 at stalled replication forks in response to DNA damage: ubiquitination by RFWD3 does not lead to degradation by the proteasome and promotes removal of the RPA complex from stalled replication forks, promoting homologous recombination. Post-translationally, sumoylated on lysine residues Lys-449 and Lys-577, with Lys-449 being the major site. Sumoylation promotes recruitment of RAD51 to the DNA damage foci to initiate DNA repair through homologous recombination. Desumoylated by SENP6. In terms of processing, poly-ADP-ribosylated by PARP1; promoting recruitment of HTATSF1.

Its subcellular location is the nucleus. The protein resides in the PML body. Functionally, as part of the heterotrimeric replication protein A complex (RPA/RP-A), binds and stabilizes single-stranded DNA intermediates that form during DNA replication or upon DNA stress. It prevents their reannealing and in parallel, recruits and activates different proteins and complexes involved in DNA metabolism. Thereby, it plays an essential role both in DNA replication and the cellular response to DNA damage. In the cellular response to DNA damage, the RPA complex controls DNA repair and DNA damage checkpoint activation. Through recruitment of ATRIP activates the ATR kinase a master regulator of the DNA damage response. It is required for the recruitment of the DNA double-strand break repair factors RAD51 and RAD52 to chromatin in response to DNA damage. Also recruits to sites of DNA damage proteins like XPA and XPG that are involved in nucleotide excision repair and is required for this mechanism of DNA repair. Also plays a role in base excision repair (BER) probably through interaction with UNG. Also recruits SMARCAL1/HARP, which is involved in replication fork restart, to sites of DNA damage. Plays a role in telomere maintenance. As part of the alternative replication protein A complex, aRPA, binds single-stranded DNA and probably plays a role in DNA repair. Compared to the RPA2-containing, canonical RPA complex, may not support chromosomal DNA replication and cell cycle progression through S-phase. The aRPA may not promote efficient priming by DNA polymerase alpha but could support DNA synthesis by polymerase delta in presence of PCNA and replication factor C (RFC), the dual incision/excision reaction of nucleotide excision repair and RAD51-dependent strand exchange. RPA stimulates 5'-3' helicase activity of the BRIP1/FANCJ. This is Replication protein A 70 kDa DNA-binding subunit (RPA1) from Homo sapiens (Human).